A 571-amino-acid chain; its full sequence is Zinc metalloproteinase nas-15 (571 aa).

The first 15 residues, 1 to 15 (MREYVLIFLVAPVFA), serve as a signal peptide directing secretion. Asparagine 92 is a glycosylation site (N-linked (GlcNAc...) asparagine). Residues 114-307 (NAIKNRLQLW…FKINTLYGCP (194 aa)) enclose the Peptidase M12A domain. Intrachain disulfides connect cysteine 156–cysteine 306, cysteine 178–cysteine 197, cysteine 354–cysteine 388, cysteine 361–cysteine 381, and cysteine 370–cysteine 385. Histidine 205 is a binding site for Zn(2+). Residue glutamate 206 is part of the active site. Histidine 209 and histidine 215 together coordinate Zn(2+). Residues 354-388 (CRNLRGDCDDLAKQGWCIRNPGWMRANCPISCGMC) form the ShKT 1 domain. The span at 407 to 420 (TTTARPQKPVTQPI) shows a compositional bias: low complexity. The tract at residues 407–426 (TTTARPQKPVTQPIQPLPPV) is disordered. 3 disulfide bridges follow: cysteine 437-cysteine 471, cysteine 444-cysteine 464, and cysteine 453-cysteine 468. Residues 437-471 (CEDLRVDCLVLVSQRYCKISQNFMKSYCAKSCGFC) enclose the ShKT 2 domain. The segment at 500-530 (IRSRSPAPPVSTTTKAAPTTSTTSAAPYSPT) is disordered. Positions 509 to 527 (VSTTTKAAPTTSTTSAAPY) are enriched in low complexity. 3 disulfide bridges follow: cysteine 536/cysteine 571, cysteine 543/cysteine 564, and cysteine 552/cysteine 568. The ShKT 3 domain maps to 536–571 (CSDRKHFCSHWKSAGFCEGIFMNYMKKNCPASCGLC).

The cofactor is Zn(2+). As to expression, expressed in pharyngeal marginal cells and muscles.

Its subcellular location is the secreted. Functionally, metalloprotease. The chain is Zinc metalloproteinase nas-15 (nas-15) from Caenorhabditis elegans.